Reading from the N-terminus, the 126-residue chain is Glycine cleavage system H protein (126 aa).

Positions 24–105 constitute a Lipoyl-binding domain; that stretch reads TLTVGITDHA…AYGVWLFKIK (82 aa). An N6-lipoyllysine modification is found at Lys-65.

The protein belongs to the GcvH family. As to quaternary structure, the glycine cleavage system is composed of four proteins: P, T, L and H. (R)-lipoate is required as a cofactor.

Its function is as follows. The glycine cleavage system catalyzes the degradation of glycine. The H protein shuttles the methylamine group of glycine from the P protein to the T protein. This Burkholderia ambifaria (strain MC40-6) protein is Glycine cleavage system H protein.